Here is a 396-residue protein sequence, read N- to C-terminus: L-lactate dehydrogenase (396 aa).

The FMN hydroxy acid dehydrogenase domain occupies 1–380 (MIISAASDYR…SGDSLVQELG (380 aa)). Tyr-24 lines the substrate pocket. Positions 106 and 127 each coordinate FMN. Tyr-129 contributes to the substrate binding site. Thr-155 provides a ligand contact to FMN. Arg-164 is a substrate binding site. Lys-251 serves as a coordination point for FMN. Catalysis depends on His-275, which acts as the Proton acceptor. Arg-278 is a substrate binding site. Position 306–330 (306–330 (DSGIRNGLDVVRMIALGADTVLLGR)) interacts with FMN.

It belongs to the FMN-dependent alpha-hydroxy acid dehydrogenase family. FMN serves as cofactor.

It is found in the cell inner membrane. It catalyses the reaction (S)-lactate + A = pyruvate + AH2. Its function is as follows. Catalyzes the conversion of L-lactate to pyruvate. Is coupled to the respiratory chain. The protein is L-lactate dehydrogenase of Salmonella enteritidis PT4 (strain P125109).